Here is a 398-residue protein sequence, read N- to C-terminus: Mitochondrial protein import protein mas5 (398 aa).

Positions 7–88 (GYYKVLELSP…KKKKEYDSGM (82 aa)) constitute a J domain. The CR-type zinc-finger motif lies at 139–219 (GKVSKFNVRT…CNGAEYIQDK (81 aa)). Position 144–146 (144–146 (FNV)) interacts with substrate. Zn(2+)-binding residues include Cys152, Cys155, Cys166, Cys169, Cys192, Cys195, Cys207, and Cys210. 4 CXXCXGXG motif repeats span residues 152-159 (CTTCDGKG), 166-173 (CKKCNGNG), 192-199 (CDGCDGSG), and 207-214 (CSTCNGAE). Substrate is bound by residues 221–222 (MF) and 253–255 (VIF). A disordered region spans residues 367 to 386 (FGSMPEPERDHEDASEEGAQ).

Belongs to the DnaJ family. Homodimer. It depends on Zn(2+) as a cofactor.

The protein resides in the cytoplasm. Functionally, probably involved in mitosomal protein import. The polypeptide is Mitochondrial protein import protein mas5 (MAS5) (Encephalitozoon cuniculi (strain GB-M1) (Microsporidian parasite)).